The primary structure comprises 1125 residues: Speract receptor (1125 aa).

The signal sequence occupies residues 1–21 (MAHARHLFLFMVAFTITMVIA). Residues 22–510 (RLDFNPTIIN…GELCTNWALY (489 aa)) lie on the Extracellular side of the membrane. Asn185 and Asn409 each carry an N-linked (GlcNAc...) asparagine glycan. The chain crosses the membrane as a helical span at residues 511-531 (LGASIPTFLIIFGGLIGFFIY). Residues 532 to 1125 (RKRAYEAALD…AANRVIPDDV (594 aa)) are Cytoplasmic-facing. The Protein kinase domain maps to 571–839 (MSAISVISNA…PNIMAVRTML (269 aa)). In terms of domain architecture, Guanylate cyclase spans 914–1044 (SIFFSDIVGF…DTVNTASRME (131 aa)).

It belongs to the adenylyl cyclase class-4/guanylyl cyclase family.

It localises to the membrane. The catalysed reaction is GTP = 3',5'-cyclic GMP + diphosphate. In terms of biological role, implicated as a cell-surface receptor on spermatozoa for 'speract' a chemotactic peptide, and on various other cells as a receptor for atrial natriuretic peptide. In Strongylocentrotus purpuratus (Purple sea urchin), this protein is Speract receptor.